The sequence spans 1087 residues: Exoglucanase XynX (1087 aa).

An N-terminal signal peptide occupies residues 1–30 (MKNNLSKFVSIFTAFIMIFGTSLFFPHVSA). In terms of domain architecture, CBM-cenC spans 37–188 (ANLVSNGDFE…YIDDVVVTPQ (152 aa)). The GH10 domain occupies 204-527 (QNDIPDLSSV…KPAYWAIADP (324 aa)). The Proton donor role is filled by Glu347. Asp389 is a catalytic residue. Residue Glu452 is the Nucleophile of the active site. 3 SLH domains span residues 903 to 966 (KKSV…YNGE), 967 to 1025 (FSDV…KEEN), and 1028 to 1087 (ATSF…SNNL).

Belongs to the glycosyl hydrolase 10 (cellulase F) family.

It carries out the reaction Hydrolysis of (1-&gt;4)-beta-D-glucosidic linkages in cellulose and cellotetraose, releasing cellobiose from the non-reducing ends of the chains.. This chain is Exoglucanase XynX (xynX), found in Acetivibrio thermocellus (Hungateiclostridium thermocellum).